A 1400-amino-acid chain; its full sequence is S phase cyclin A-associated protein in the endoplasmic reticulum (1400 aa).

Disordered regions lie at residues 36–61 (ESKD…GTHK), 226–277 (VKAH…IRSR), 517–550 (PARP…HEEK), and 701–723 (RIEQ…RARD). Positions 231–243 (TGSTASSEITPAQ) are enriched in polar residues. Over residues 539-550 (TIAESKKKHEEK) the composition is skewed to basic and acidic residues. Residues 792–816 (KQCSLCNVLISSEVYLFSHVKGRKH) form a C2H2-type zinc finger. Ser-832 is modified (phosphoserine).

Interacts with CCNA2/CDK2 complex, but not with CCNA2/CDC2, CCNB1/CDC2 or CCNE1/CDK2 complexes, at multiple phases of the cell cycle, including S and G2/M. Post-translationally, phosphorylated in vitro by the CCNA2/CDK2 complex. In terms of tissue distribution, widely expressed with high expression in testis. Isoform 1 is detected in various tissues, including retina, fetal and adult brain. Isoform 2 is expressed in the retina at high levels, and in the brain at very low levels.

The protein localises to the endoplasmic reticulum. It is found in the nucleus. Its function is as follows. CCNA2/CDK2 regulatory protein that transiently maintains CCNA2 in the cytoplasm. This is S phase cyclin A-associated protein in the endoplasmic reticulum from Homo sapiens (Human).